The following is a 1208-amino-acid chain: MEGGESAESTHNTKVSDSAYSNSCSNSQSQRSGSSKSRLSGSHSSGSSGYGGKPSTQASSSDMIIKRNKDKSRKKKKNKGAGQGAGQAGQSLISASTSLEGGAEEKPRPSGSGCGVEQQSCRELLQDQQHGEDHSEPKATEQLQQEEGDRSGSESEAERVENAAKSEAAQSFPIPSPLSVTIVPPSMGGCAGVGHAASLDSGLAKLDKTWEAGGPGKVEPVPGVPGTAAAGTGQRGERLKEESFCCVISMHDGIVLYTTPSITDVLGYPRDMWLGRSFIDFVHLKDRATFASQITTGIPIAESRGSVPKDTKSTFCVMLRRYRGLKSGGFGVIGRPVSYEPFRLGLTFREAPEEARPDNYMVSNGTNMLLVICATPIKSSYKIPDEILSQKSPKFAIRHTATGIISHVDSAAVSALGYLPQDLIGRSIMDFYHQEDLSVMKETYEMVMKKGQTAGASFCSKPYRFLIQNGCYVLLETEWTSFVNPWSRKLEFVVGHHRVFQGPKSCNVFEAAPTCKLKMSEEAQSRNTRIKEDIVKRLAETVSRPSDTVKQEVSRRCQALASFMETLMDEVSRADLKLELPHENELTVSERDSVMLGEISPHHDYYDSKSSTETPPSYNQLNYNENLLRFFNSKPVTAPAELDPPKTEPPEPRGTCVSGASGPMSPVHEGSGGSGSSGNFTTASNIHMSSVTNTSIAGTGGTGTGTGTGTGTGTGTGTGTGTGTGTGTGTGNGTNSGTGTGSASSNYRGGSVAIQPVTLTEALLNKHNDEMEKFMLKKHRESRGRSGEKSKKSATDTLKMLEYSGPGHGIKRGGSHSWEGEANKPKQQLTLGTDAIKGVVGGSGGVVGTGGGAGVAGGGGTGTGLAGTSDGRLTMSSGAGGVVGGPGGAAAAAGVISSVGSSMPGPSSYPTCTQNINLWPPFSVGITPPVHSTHTAMAQSSFSSAGLFPTFYYIPASLTPTSPTRSPRMHKHPHKGGPEMPTTSQQAAAAAAQAAQAMPLQYMAGVMYPHPSLFYTHPAAAAATAMMYQPMPFTGMTNALQIPERPLGSQSAYNKSMYTTTPPSMAKKVPGAFHSVTTPSQVQRSSSQSASVNAEPGCSASVSDPCKKEAPGSSPIPSVMGDYNSELPCSSSNPANNKKYTDSNGNSDDMDGSSFSSFYSSFIKTTDGSESPPDIEKDPKHRKLKSMSPSDSKIMEHPEEDQTQHGDG.

Disordered stretches follow at residues 1–171 (MEGG…AAQS) and 214–235 (GPGKVEPVPGVPGTAAAGTGQR). Positions 16 to 47 (SDSAYSNSCSNSQSQRSGSSKSRLSGSHSSGS) are enriched in low complexity. The short motif at 66 to 79 (KRNKDKSRKKKKNK) is the Nuclear localization signal element. Basic residues predominate over residues 66–79 (KRNKDKSRKKKKNK). Basic and acidic residues-rich tracts occupy residues 129 to 139 (QHGEDHSEPKA) and 147 to 164 (EGDRSGSESEAERVENAA). The segment covering 217–232 (KVEPVPGVPGTAAAGT) has biased composition (low complexity). 2 PAS domains span residues 242 to 377 (ESFC…ATPI) and 395 to 501 (FAIR…RVFQ). 4 disordered regions span residues 636–747 (VTAP…SSNY), 802–821 (EYSGPGHGIKRGGSHSWEGE), 961–982 (TSPTRSPRMHKHPHKGGPEMPT), and 1076–1208 (VTTP…HGDG). Residues 679 to 697 (NFTTASNIHMSSVTNTSIA) are compositionally biased toward polar residues. 17 consecutive repeat copies span residues 698–699 (GT), 701–702 (GT), 703–704 (GT), 705–706 (GT), 707–708 (GT), 709–710 (GT), 711–712 (GT), 713–714 (GT), 715–716 (GT), 717–718 (GT), 719–720 (GT), 721–722 (GT), 723–724 (GT), 725–726 (GT), 727–728 (GT), 729–730 (GT), and 731–732 (GN). The span at 698-740 (GTGGTGTGTGTGTGTGTGTGTGTGTGTGTGTGTGNGTNSGTGT) shows a compositional bias: gly residues. The interval 698–742 (GTGGTGTGTGTGTGTGTGTGTGTGTGTGTGTGTGNGTNSGTGTGS) is 21 X 2 AA approximate tandem repeats of G-[TN]. Residues 734 to 735 (TN) form an 18; approximate repeat. Tandem repeats lie at residues 737-738 (GT) and 739-740 (GT). A 21; approximate repeat occupies 741-742 (GS). Residues 1076–1092 (VTTPSQVQRSSSQSASV) are compositionally biased toward low complexity. Positions 1127-1138 (LPCSSSNPANNK) are enriched in polar residues. Low complexity predominate over residues 1142 to 1161 (DSNGNSDDMDGSSFSSFYSS). Residues 1193-1208 (KIMEHPEEDQTQHGDG) show a composition bias toward basic and acidic residues.

As to quaternary structure, forms a heterodimer with timeless (TIM); the complex then translocates into the nucleus. Post-translationally, phosphorylated with a circadian rhythmicity, probably by the double-time protein (dbt). Phosphorylation could be implicated in the stability of per monomer and in the formation of heterodimer per-tim.

Its subcellular location is the nucleus. The protein resides in the cytoplasm. It is found in the perinuclear region. Its function is as follows. Essential for biological clock functions. Determines the period length of circadian and ultradian rhythms; an increase in PER dosage leads to shortened circadian rhythms and a decrease leads to lengthened circadian rhythms. Essential for the circadian rhythmicity of locomotor activity, eclosion behavior, and for the rhythmic component of the male courtship song that originates in the thoracic nervous system. The biological cycle depends on the rhythmic formation and nuclear localization of the TIM-PER complex. Light induces the degradation of TIM, which promotes elimination of PER. Nuclear activity of the heterodimer coordinatively regulates PER and TIM transcription through a negative feedback loop. Behaves as a negative element in circadian transcriptional loop. Does not appear to bind DNA, suggesting indirect transcriptional inhibition. In Drosophila yakuba (Fruit fly), this protein is Period circadian protein (per).